The chain runs to 86 residues: Sec-independent protein translocase protein TatA (86 aa).

Residues 1 to 21 (MGGISIWQLLIIAVIVVLLFG) form a helical membrane-spanning segment. Residues 42-86 (AIGDDNQPQQAQKTSSDADFETKNITEKQSVAQSETSESKNKEQV) are disordered. Composition is skewed to polar residues over residues 47-58 (NQPQQAQKTSSD) and 68-77 (EKQSVAQSET).

This sequence belongs to the TatA/E family. In terms of assembly, the Tat system comprises two distinct complexes: a TatABC complex, containing multiple copies of TatA, TatB and TatC subunits, and a separate TatA complex, containing only TatA subunits. Substrates initially bind to the TatABC complex, which probably triggers association of the separate TatA complex to form the active translocon.

It localises to the cell inner membrane. Its function is as follows. Part of the twin-arginine translocation (Tat) system that transports large folded proteins containing a characteristic twin-arginine motif in their signal peptide across membranes. TatA could form the protein-conducting channel of the Tat system. In Photorhabdus laumondii subsp. laumondii (strain DSM 15139 / CIP 105565 / TT01) (Photorhabdus luminescens subsp. laumondii), this protein is Sec-independent protein translocase protein TatA.